We begin with the raw amino-acid sequence, 452 residues long: uncharacterized protein (452 aa).

An N-terminal signal peptide occupies residues 1–20; it reads MQFFGSLFVSLLGAAGLANA. The disordered stretch occupies residues 130–151; that stretch reads TQSSSNSTSTMNSTGSVSGGSV.

The protein localises to the endoplasmic reticulum. This is an uncharacterized protein from Schizosaccharomyces pombe (strain 972 / ATCC 24843) (Fission yeast).